Reading from the N-terminus, the 373-residue chain is Chaperone protein DnaJ (373 aa).

The 66-residue stretch at 4–69 (SYYEILEITQ…EKRAIYDRYG (66 aa)) folds into the J domain. The segment at 135–212 (GCKKNIDFTY…CKGLGYNESK (78 aa)) adopts a CR-type zinc-finger fold. Residues Cys-148, Cys-151, Cys-164, Cys-167, Cys-186, Cys-189, Cys-200, and Cys-203 each coordinate Zn(2+). CXXCXGXG motif repeat units lie at residues 148–155 (CKTCNGTG), 164–171 (CPKCQGRG), 186–193 (CPDCQGIG), and 200–207 (CSDCKGLG).

The protein belongs to the DnaJ family. As to quaternary structure, homodimer. Zn(2+) is required as a cofactor.

It is found in the cytoplasm. Functionally, participates actively in the response to hyperosmotic and heat shock by preventing the aggregation of stress-denatured proteins and by disaggregating proteins, also in an autonomous, DnaK-independent fashion. Unfolded proteins bind initially to DnaJ; upon interaction with the DnaJ-bound protein, DnaK hydrolyzes its bound ATP, resulting in the formation of a stable complex. GrpE releases ADP from DnaK; ATP binding to DnaK triggers the release of the substrate protein, thus completing the reaction cycle. Several rounds of ATP-dependent interactions between DnaJ, DnaK and GrpE are required for fully efficient folding. Also involved, together with DnaK and GrpE, in the DNA replication of plasmids through activation of initiation proteins. In Campylobacter jejuni (strain RM1221), this protein is Chaperone protein DnaJ.